Reading from the N-terminus, the 282-residue chain is 2-dehydro-3-deoxyphosphooctonate aldolase (282 aa).

Belongs to the KdsA family.

It localises to the cytoplasm. The enzyme catalyses D-arabinose 5-phosphate + phosphoenolpyruvate + H2O = 3-deoxy-alpha-D-manno-2-octulosonate-8-phosphate + phosphate. Its pathway is carbohydrate biosynthesis; 3-deoxy-D-manno-octulosonate biosynthesis; 3-deoxy-D-manno-octulosonate from D-ribulose 5-phosphate: step 2/3. It functions in the pathway bacterial outer membrane biogenesis; lipopolysaccharide biosynthesis. In Shewanella oneidensis (strain ATCC 700550 / JCM 31522 / CIP 106686 / LMG 19005 / NCIMB 14063 / MR-1), this protein is 2-dehydro-3-deoxyphosphooctonate aldolase.